The primary structure comprises 525 residues: 2-isopropylmalate synthase (525 aa).

One can recognise a Pyruvate carboxyltransferase domain in the interval 12 to 274 (VVIFDTTLRD…WNKIDTTQLT (263 aa)). Positions 21, 209, 211, and 245 each coordinate Mn(2+). The tract at residues 398–525 (KLLSLSVIAG…GHGASAAAAS (128 aa)) is regulatory domain.

The protein belongs to the alpha-IPM synthase/homocitrate synthase family. LeuA type 1 subfamily. Homodimer. Requires Mn(2+) as cofactor.

It localises to the cytoplasm. It carries out the reaction 3-methyl-2-oxobutanoate + acetyl-CoA + H2O = (2S)-2-isopropylmalate + CoA + H(+). It participates in amino-acid biosynthesis; L-leucine biosynthesis; L-leucine from 3-methyl-2-oxobutanoate: step 1/4. Functionally, catalyzes the condensation of the acetyl group of acetyl-CoA with 3-methyl-2-oxobutanoate (2-ketoisovalerate) to form 3-carboxy-3-hydroxy-4-methylpentanoate (2-isopropylmalate). In Bradyrhizobium sp. (strain ORS 278), this protein is 2-isopropylmalate synthase.